The primary structure comprises 281 residues: Large ribosomal subunit protein uL2 (281 aa).

A compositionally biased stretch (basic and acidic residues) spans 27–38; the sequence is DSPEKSLTEPLK. 2 disordered regions span residues 27–59 and 225–281; these read DSPEKSLTEPLKRSGGRNVHGHITRRHQGGGHK and AMNP…ARSQ. Basic residues predominate over residues 45–59; the sequence is VHGHITRRHQGGGHK.

The protein belongs to the universal ribosomal protein uL2 family. In terms of assembly, part of the 50S ribosomal subunit. Forms a bridge to the 30S subunit in the 70S ribosome.

One of the primary rRNA binding proteins. Required for association of the 30S and 50S subunits to form the 70S ribosome, for tRNA binding and peptide bond formation. It has been suggested to have peptidyltransferase activity; this is somewhat controversial. Makes several contacts with the 16S rRNA in the 70S ribosome. In Myxococcus xanthus (strain DK1622), this protein is Large ribosomal subunit protein uL2.